Consider the following 300-residue polypeptide: 4-hydroxy-tetrahydrodipicolinate synthase (300 aa).

Residue threonine 45 participates in pyruvate binding. Tyrosine 140 functions as the Proton donor/acceptor in the catalytic mechanism. The Schiff-base intermediate with substrate role is filled by lysine 169. Valine 210 lines the pyruvate pocket.

This sequence belongs to the DapA family. Homotetramer; dimer of dimers.

It localises to the cytoplasm. It catalyses the reaction L-aspartate 4-semialdehyde + pyruvate = (2S,4S)-4-hydroxy-2,3,4,5-tetrahydrodipicolinate + H2O + H(+). Its pathway is amino-acid biosynthesis; L-lysine biosynthesis via DAP pathway; (S)-tetrahydrodipicolinate from L-aspartate: step 3/4. In terms of biological role, catalyzes the condensation of (S)-aspartate-beta-semialdehyde [(S)-ASA] and pyruvate to 4-hydroxy-tetrahydrodipicolinate (HTPA). The polypeptide is 4-hydroxy-tetrahydrodipicolinate synthase (Helicobacter acinonychis (strain Sheeba)).